The sequence spans 835 residues: Translation initiation factor IF-2 (835 aa).

Residues 1–243 (MSDTDGKKTL…RARQKAMGGA (243 aa)) are disordered. Over residues 43-67 (VPKPGAGKPSAGGSSPAGDPSRRPA) the composition is skewed to low complexity. Basic and acidic residues-rich tracts occupy residues 85–147 (KARE…EAKR), 157–166 (EAPKAERSAE), and 175–205 (EGGD…DGRR). Residues 332 to 500 (PRPPVITIMG…AIALQAEILE (169 aa)) form the tr-type G domain. Positions 341–348 (GHVDHGKT) are G1. A GTP-binding site is contributed by 341-348 (GHVDHGKT). The G2 stretch occupies residues 366-370 (GITQH). The tract at residues 388 to 391 (DTPG) is G3. GTP contacts are provided by residues 388–392 (DTPGH) and 442–445 (NKID). The tract at residues 442-445 (NKID) is G4. Residues 478 to 480 (SAK) form a G5 region.

The protein belongs to the TRAFAC class translation factor GTPase superfamily. Classic translation factor GTPase family. IF-2 subfamily.

It localises to the cytoplasm. One of the essential components for the initiation of protein synthesis. Protects formylmethionyl-tRNA from spontaneous hydrolysis and promotes its binding to the 30S ribosomal subunits. Also involved in the hydrolysis of GTP during the formation of the 70S ribosomal complex. This Ruegeria pomeroyi (strain ATCC 700808 / DSM 15171 / DSS-3) (Silicibacter pomeroyi) protein is Translation initiation factor IF-2.